The sequence spans 112 residues: MAEDIEEIRKKKLLELQKRYLEQQKAQEEAIRQEMELEAQLNAIMRHILTPEARERLGRVKLVRPELARQVELVLVQLYQAGQIREPIDDAKLKKILAQIDARTRRDFRIKW.

The protein belongs to the PDCD5 family.

The polypeptide is DNA-binding protein TON_1102 (Thermococcus onnurineus (strain NA1)).